The primary structure comprises 1133 residues: DNA-directed RNA polymerase III subunit RPC2 (1133 aa).

Lysine 186 contacts RNA. Arginine 195 is a binding site for DNA. Arginine 213 contacts RNA. Aspartate 432 contributes to the DNA binding site. 2 residues coordinate RNA: glutamine 438 and glutamine 692. Aspartate 753 serves as a coordination point for Mg(2+). Residues lysine 896, lysine 904, and lysine 1019 each contribute to the RNA site. Arginine 1039, serine 1040, and arginine 1046 together coordinate DNA. Zn(2+) is bound by residues cysteine 1080, cysteine 1083, cysteine 1092, and cysteine 1095. Residues 1080–1095 form a C4-type zinc finger; sequence CGQCGLLGYSGWCHYC.

This sequence belongs to the RNA polymerase beta chain family. In terms of assembly, component of the RNA polymerase III (Pol III) complex consisting of 17 subunits: a ten-subunit catalytic core composed of POLR3A/RPC1, POLR3B/RPC2, POLR1C/RPAC1, POLR1D/RPAC2, POLR3K/RPC10, POLR2E/RPABC1, POLR2F/RPABC2, POLR2H/RPABC3, POLR2K/RPABC4 and POLR2L/RPABC5; a mobile stalk composed of two subunits POLR3H/RPC8 and CRCP/RPC9, protruding from the core and functioning primarily in transcription initiation; and additional subunits homologous to general transcription factors of the RNA polymerase II machinery, POLR3C/RPC3-POLR3F/RPC6-POLR3G/RPC7 heterotrimer required for transcription initiation and POLR3D/RPC4-POLR3E/RPC5 heterodimer involved in both transcription initiation and termination. Mg(2+) is required as a cofactor.

The protein resides in the nucleus. Its subcellular location is the cytoplasm. It is found in the cytosol. It catalyses the reaction RNA(n) + a ribonucleoside 5'-triphosphate = RNA(n+1) + diphosphate. In terms of biological role, catalytic core component of RNA polymerase III (Pol III), a DNA-dependent RNA polymerase which synthesizes small non-coding RNAs using the four ribonucleoside triphosphates as substrates. Synthesizes 5S rRNA, snRNAs, tRNAs and miRNAs from at least 500 distinct genomic loci. Pol III-mediated transcription cycle proceeds through transcription initiation, transcription elongation and transcription termination stages. During transcription initiation, Pol III is recruited to DNA promoters type I, II or III with the help of general transcription factors and other specific initiation factors. Once the polymerase has escaped from the promoter it enters the elongation phase during which RNA is actively polymerized, based on complementarity with the template DNA strand. Transcription termination involves the release of the RNA transcript and polymerase from the DNA. Forms Pol III active center together with the largest subunit POLR3A/RPC1. A single-stranded DNA template strand of the promoter is positioned within the central active site cleft of Pol III. Appends one nucleotide at a time to the 3' end of the nascent RNA, with POLR3A/RPC1 contributing a Mg(2+)-coordinating DxDGD motif, and POLR3B/RPC2 participating in the coordination of a second Mg(2+) ion and providing lysine residues believed to facilitate Watson-Crick base pairing between the incoming nucleotide and template base. Typically, Mg(2+) ions direct a 5' nucleoside triphosphate to form a phosphodiester bond with the 3' hydroxyl of the preceding nucleotide of the nascent RNA, with the elimination of pyrophosphate. Pol III plays a key role in sensing and limiting infection by intracellular bacteria and DNA viruses. Acts as a nuclear and cytosolic DNA sensor involved in innate immune response. Can sense non-self dsDNA that serves as template for transcription into dsRNA. The non-self RNA polymerase III transcripts, such as Epstein-Barr virus-encoded RNAs (EBERs) induce type I interferon and NF-kappa-B through the RIG-I pathway. The sequence is that of DNA-directed RNA polymerase III subunit RPC2 from Homo sapiens (Human).